The sequence spans 214 residues: Thiamine-phosphate synthase (214 aa).

Residues 37 to 41 (QYREK) and N73 each bind 4-amino-2-methyl-5-(diphosphooxymethyl)pyrimidine. Mg(2+) contacts are provided by D74 and D93. 4-amino-2-methyl-5-(diphosphooxymethyl)pyrimidine is bound at residue S112. 139–141 (TIS) provides a ligand contact to 2-[(2R,5Z)-2-carboxy-4-methylthiazol-5(2H)-ylidene]ethyl phosphate. K142 is a 4-amino-2-methyl-5-(diphosphooxymethyl)pyrimidine binding site. Residues G171 and 191–192 (IS) each bind 2-[(2R,5Z)-2-carboxy-4-methylthiazol-5(2H)-ylidene]ethyl phosphate.

It belongs to the thiamine-phosphate synthase family. Requires Mg(2+) as cofactor.

It carries out the reaction 2-[(2R,5Z)-2-carboxy-4-methylthiazol-5(2H)-ylidene]ethyl phosphate + 4-amino-2-methyl-5-(diphosphooxymethyl)pyrimidine + 2 H(+) = thiamine phosphate + CO2 + diphosphate. It catalyses the reaction 2-(2-carboxy-4-methylthiazol-5-yl)ethyl phosphate + 4-amino-2-methyl-5-(diphosphooxymethyl)pyrimidine + 2 H(+) = thiamine phosphate + CO2 + diphosphate. The catalysed reaction is 4-methyl-5-(2-phosphooxyethyl)-thiazole + 4-amino-2-methyl-5-(diphosphooxymethyl)pyrimidine + H(+) = thiamine phosphate + diphosphate. The protein operates within cofactor biosynthesis; thiamine diphosphate biosynthesis; thiamine phosphate from 4-amino-2-methyl-5-diphosphomethylpyrimidine and 4-methyl-5-(2-phosphoethyl)-thiazole: step 1/1. Functionally, condenses 4-methyl-5-(beta-hydroxyethyl)thiazole monophosphate (THZ-P) and 2-methyl-4-amino-5-hydroxymethyl pyrimidine pyrophosphate (HMP-PP) to form thiamine monophosphate (TMP). This chain is Thiamine-phosphate synthase, found in Listeria monocytogenes serovar 1/2a (strain ATCC BAA-679 / EGD-e).